Consider the following 84-residue polypeptide: Cell division topological specificity factor (84 aa).

The protein belongs to the MinE family.

In terms of biological role, prevents the cell division inhibition by proteins MinC and MinD at internal division sites while permitting inhibition at polar sites. This ensures cell division at the proper site by restricting the formation of a division septum at the midpoint of the long axis of the cell. This chain is Cell division topological specificity factor, found in Pseudomonas putida (strain W619).